Reading from the N-terminus, the 183-residue chain is Small ribosomal subunit protein uS4c (183 aa).

Residues 82–143 (MRLDNILFRL…KQRSKALIQN (62 aa)) form the S4 RNA-binding domain.

Belongs to the universal ribosomal protein uS4 family. Part of the 30S ribosomal subunit. Contacts protein S5. The interaction surface between S4 and S5 is involved in control of translational fidelity.

It localises to the plastid. The protein resides in the chloroplast. One of the primary rRNA binding proteins, it binds directly to 16S rRNA where it nucleates assembly of the body of the 30S subunit. Its function is as follows. With S5 and S12 plays an important role in translational accuracy. The chain is Small ribosomal subunit protein uS4c (rps4) from Crocosmia sp. (strain Porto Alegre 034).